Here is a 297-residue protein sequence, read N- to C-terminus: UTP--glucose-1-phosphate uridylyltransferase (297 aa).

Belongs to the UDPGP type 2 family.

It carries out the reaction alpha-D-glucose 1-phosphate + UTP + H(+) = UDP-alpha-D-glucose + diphosphate. The protein operates within carbohydrate metabolism; nucleotide-sugar metabolism. Its pathway is bacterial outer membrane biogenesis; lipopolysaccharide biosynthesis. This is UTP--glucose-1-phosphate uridylyltransferase (galF) from Escherichia coli O157:H7.